The following is a 165-amino-acid chain: MDIAHDLQSIGAQEQALVFPHFDPARAWALGNRMHALATARGHAIAIDIVTFGQPLFYAALAGATPDNADWVRRKRNVVAHFRRSSYAIGLRMQQAGASLADKHGLPISDYSPHGGSFPLTVAGAGVIGSITASGLPQRADHEFVVEALCAELGQDYAALALARS.

This sequence belongs to the UPF0303 family.

The chain is UPF0303 protein Bamb_1459 from Burkholderia ambifaria (strain ATCC BAA-244 / DSM 16087 / CCUG 44356 / LMG 19182 / AMMD) (Burkholderia cepacia (strain AMMD)).